The chain runs to 740 residues: Phosphoribosylformylglycinamidine synthase subunit PurL (740 aa).

The active site involves His-54. ATP is bound by residues Tyr-57 and Lys-96. Position 98 (Glu-98) interacts with Mg(2+). Substrate contacts are provided by residues 99-102 (SHNH) and Arg-121. The active-site Proton acceptor is the His-100. Residue Asp-122 coordinates Mg(2+). Gln-245 provides a ligand contact to substrate. Mg(2+) is bound at residue Asp-273. Residue 317-319 (ESQ) coordinates substrate. ATP is bound by residues Asp-499 and Gly-536. A Mg(2+)-binding site is contributed by Asn-537. Residue Ser-539 participates in substrate binding.

Belongs to the FGAMS family. Monomer. Part of the FGAM synthase complex composed of 1 PurL, 1 PurQ and 2 PurS subunits.

Its subcellular location is the cytoplasm. The enzyme catalyses N(2)-formyl-N(1)-(5-phospho-beta-D-ribosyl)glycinamide + L-glutamine + ATP + H2O = 2-formamido-N(1)-(5-O-phospho-beta-D-ribosyl)acetamidine + L-glutamate + ADP + phosphate + H(+). Its pathway is purine metabolism; IMP biosynthesis via de novo pathway; 5-amino-1-(5-phospho-D-ribosyl)imidazole from N(2)-formyl-N(1)-(5-phospho-D-ribosyl)glycinamide: step 1/2. In terms of biological role, part of the phosphoribosylformylglycinamidine synthase complex involved in the purines biosynthetic pathway. Catalyzes the ATP-dependent conversion of formylglycinamide ribonucleotide (FGAR) and glutamine to yield formylglycinamidine ribonucleotide (FGAM) and glutamate. The FGAM synthase complex is composed of three subunits. PurQ produces an ammonia molecule by converting glutamine to glutamate. PurL transfers the ammonia molecule to FGAR to form FGAM in an ATP-dependent manner. PurS interacts with PurQ and PurL and is thought to assist in the transfer of the ammonia molecule from PurQ to PurL. In Anoxybacillus flavithermus (strain DSM 21510 / WK1), this protein is Phosphoribosylformylglycinamidine synthase subunit PurL.